We begin with the raw amino-acid sequence, 441 residues long: ATP-dependent RNA helicase SUB2-1 (441 aa).

Residues 1–19 (MSHEGEEDLLEYSDNEQDI) are compositionally biased toward acidic residues. Residues 1–46 (MSHEGEEDLLEYSDNEQDIQVDASKAAEPSELDATTAEDASNGDAE) form a disordered region. The short motif at 57 to 85 (TGFKDFLLKPELARAIIDCGFEHPSEVQQ) is the Q motif element. The region spanning 88–263 (IPQSIHGTDV…RRFLQNPLEI (176 aa)) is the Helicase ATP-binding domain. 101-108 (AKSGLGKT) serves as a coordination point for ATP. The DECD box signature appears at 210-213 (DECD). The region spanning 291–436 (KLAQLLDDLE…EFPEEGIDPS (146 aa)) is the Helicase C-terminal domain.

This sequence belongs to the DEAD box helicase family. DECD subfamily.

It is found in the nucleus. The catalysed reaction is ATP + H2O = ADP + phosphate + H(+). Its function is as follows. ATP-binding RNA helicase involved in transcription elongation and required for the export of mRNA out of the nucleus. SUB2 also plays a role in pre-mRNA splicing and spliceosome assembly. May be involved in rDNA and telomeric silencing, and maintenance of genome integrity. The polypeptide is ATP-dependent RNA helicase SUB2-1 (SUB2-1) (Vanderwaltozyma polyspora (strain ATCC 22028 / DSM 70294 / BCRC 21397 / CBS 2163 / NBRC 10782 / NRRL Y-8283 / UCD 57-17) (Kluyveromyces polysporus)).